Here is a 328-residue protein sequence, read N- to C-terminus: MQHLKELTEKARSALDALDQGLDALEEFRVEYFGKKGHFTALMQELRNVAAEERPAIGAKINEAKQTILDILNAKKEAWEQEALNAKLAAESIDVSLPGRKTELGGLHPVSITIERVVKFFSELGFTVASGPEIETDYYNFDALNIPAHHPARADHDTFWFDAQRLLRTQTSGVQIRTMENMQPPIRIVAPGRVYRNDYDQTHTPMFHQIELLYVDKKANFTELKGLIHDFLKAFFEEDLQVRFRPSFFPFTEPSAEVDVMRQNGKWLEVLGCGMVHPNVLRNVGIDPEEYSGFAVGMGVERLTMLRYNVTDLRSFFENDLRFLKQFK.

Residue Glu-253 participates in Mg(2+) binding.

It belongs to the class-II aminoacyl-tRNA synthetase family. Phe-tRNA synthetase alpha subunit type 1 subfamily. As to quaternary structure, tetramer of two alpha and two beta subunits. Mg(2+) is required as a cofactor.

It localises to the cytoplasm. It catalyses the reaction tRNA(Phe) + L-phenylalanine + ATP = L-phenylalanyl-tRNA(Phe) + AMP + diphosphate + H(+). In Actinobacillus pleuropneumoniae serotype 7 (strain AP76), this protein is Phenylalanine--tRNA ligase alpha subunit.